The primary structure comprises 354 residues: Replication factor C subunit 3 (354 aa).

41–48 (GPSGSGKK) serves as a coordination point for ATP.

Belongs to the activator 1 small subunits family. Heterotetramer of subunits RFC2, RFC3, RFC4 and RFC5 that can form a complex with RFC1.

The protein resides in the nucleus. Functionally, may be involved in DNA replication and thus regulate cell proliferation. The polypeptide is Replication factor C subunit 3 (RFC3) (Arabidopsis thaliana (Mouse-ear cress)).